Consider the following 138-residue polypeptide: Acidic phospholipase A2 pgPLA 1b/pgPLA 2b (138 aa).

The N-terminal stretch at 1 to 16 is a signal peptide; that stretch reads MRTLWIMAVLLVGVKG. Disulfide bonds link C42–C131, C44–C60, C59–C111, C65–C138, C66–C104, C73–C97, and C91–C102. Positions 43, 45, and 47 each coordinate Ca(2+). H63 is a catalytic residue. Residue D64 participates in Ca(2+) binding. Residue D105 is part of the active site.

The protein belongs to the phospholipase A2 family. Group II subfamily. D49 sub-subfamily. It depends on Ca(2+) as a cofactor. As to expression, expressed by the venom gland.

It is found in the secreted. It catalyses the reaction a 1,2-diacyl-sn-glycero-3-phosphocholine + H2O = a 1-acyl-sn-glycero-3-phosphocholine + a fatty acid + H(+). PLA2 catalyzes the calcium-dependent hydrolysis of the 2-acyl groups in 3-sn-phosphoglycerides. In Protobothrops flavoviridis (Habu), this protein is Acidic phospholipase A2 pgPLA 1b/pgPLA 2b.